A 160-amino-acid chain; its full sequence is SsrA-binding protein (160 aa).

Belongs to the SmpB family.

Its subcellular location is the cytoplasm. Its function is as follows. Required for rescue of stalled ribosomes mediated by trans-translation. Binds to transfer-messenger RNA (tmRNA), required for stable association of tmRNA with ribosomes. tmRNA and SmpB together mimic tRNA shape, replacing the anticodon stem-loop with SmpB. tmRNA is encoded by the ssrA gene; the 2 termini fold to resemble tRNA(Ala) and it encodes a 'tag peptide', a short internal open reading frame. During trans-translation Ala-aminoacylated tmRNA acts like a tRNA, entering the A-site of stalled ribosomes, displacing the stalled mRNA. The ribosome then switches to translate the ORF on the tmRNA; the nascent peptide is terminated with the 'tag peptide' encoded by the tmRNA and targeted for degradation. The ribosome is freed to recommence translation, which seems to be the essential function of trans-translation. This Nocardia farcinica (strain IFM 10152) protein is SsrA-binding protein.